The chain runs to 91 residues: Ice-structuring protein 2A7 (91 aa).

An N-terminal signal peptide occupies residues 1–21; it reads MALSLFTVGQLIFLFWTMRIT. A propeptide spans 22-39 (removed by a dipeptidylpeptidase); the sequence is EANPDPAAKAVPAAAAPD.

The protein belongs to the type-I AFP family. As to expression, detected in blood serum (at protein level).

The protein resides in the secreted. Its function is as follows. Contributes to protect fish blood from freezing at subzero sea water temperatures. Lowers the blood freezing point. Binds to nascent ice crystals and prevents further growth. This is Ice-structuring protein 2A7 from Pseudopleuronectes americanus (Winter flounder).